A 101-amino-acid chain; its full sequence is MAKGQSLQDPFLNALRRERVPVSIYLVNGIKLQGQVESFDQFVILLKNTVSQMVYKHAISTVVPSPPVSHHSNTPSGSTNNYHGSNPSAPQQPQQDSDDAE.

A Sm domain is found at 9-68; that stretch reads DPFLNALRRERVPVSIYLVNGIKLQGQVESFDQFVILLKNTVSQMVYKHAISTVVPSPPV. The interval 62–101 is disordered; the sequence is VVPSPPVSHHSNTPSGSTNNYHGSNPSAPQQPQQDSDDAE. Positions 70 to 86 are enriched in polar residues; the sequence is HHSNTPSGSTNNYHGSN.

The protein belongs to the Hfq family. As to quaternary structure, homohexamer.

In terms of biological role, RNA chaperone that binds small regulatory RNA (sRNAs) and mRNAs to facilitate mRNA translational regulation in response to envelope stress, environmental stress and changes in metabolite concentrations. Also binds with high specificity to tRNAs. This Yersinia pestis (strain Pestoides F) protein is RNA-binding protein Hfq.